The primary structure comprises 311 residues: Mycothiol acetyltransferase (311 aa).

Glu-35 serves as a coordination point for 1D-myo-inositol 2-(L-cysteinylamino)-2-deoxy-alpha-D-glucopyranoside. An acetyl-CoA-binding site is contributed by 79–81; the sequence is LVV. Positions 155–311 constitute an N-acetyltransferase domain; sequence VRTYVGTVDD…TAYALARIDD (157 aa). 1D-myo-inositol 2-(L-cysteinylamino)-2-deoxy-alpha-D-glucopyranoside contacts are provided by Glu-180, Lys-225, and Glu-235. Residues 239–241 and 246–252 contribute to the acetyl-CoA site; these read LGV and QGRGLGQ. 1D-myo-inositol 2-(L-cysteinylamino)-2-deoxy-alpha-D-glucopyranoside is bound at residue Tyr-278. Residue 283 to 288 participates in acetyl-CoA binding; the sequence is NVAAAR.

The protein belongs to the acetyltransferase family. MshD subfamily. In terms of assembly, monomer.

It catalyses the reaction 1D-myo-inositol 2-(L-cysteinylamino)-2-deoxy-alpha-D-glucopyranoside + acetyl-CoA = mycothiol + CoA + H(+). In terms of biological role, catalyzes the transfer of acetyl from acetyl-CoA to desacetylmycothiol (Cys-GlcN-Ins) to form mycothiol. This chain is Mycothiol acetyltransferase, found in Mycobacterium leprae (strain Br4923).